Consider the following 236-residue polypeptide: Eukaryotic translation initiation factor 3 subunit J (236 aa).

A disordered region spans residues 1 to 86 (MADDWESAAD…KEEEEQKRLA (86 aa)). Residues 28–46 (GEDDDEDVKESWEDEEEKK) show a composition bias toward acidic residues. Basic and acidic residues-rich tracts occupy residues 47–58 (DEEKPTKTEAPV) and 68–86 (AKLEEQERLKEEEEQKRLA). Residues 61–115 (KPNKALKAKLEEQERLKEEEEQKRLAEMTPEEKLAEKLRLQKIQEESDLKSALET) adopt a coiled-coil conformation.

Belongs to the eIF-3 subunit J family. Component of the eukaryotic translation initiation factor 3 (eIF-3) complex. The eIF-3 complex interacts with pix.

Its subcellular location is the cytoplasm. In terms of biological role, component of the eukaryotic translation initiation factor 3 (eIF-3) complex, which is involved in protein synthesis of a specialized repertoire of mRNAs and, together with other initiation factors, stimulates binding of mRNA and methionyl-tRNAi to the 40S ribosome. The eIF-3 complex specifically targets and initiates translation of a subset of mRNAs involved in cell proliferation. The protein is Eukaryotic translation initiation factor 3 subunit J of Drosophila mojavensis (Fruit fly).